We begin with the raw amino-acid sequence, 443 residues long: MVLDSLGKALSNALKKIARAGSVDEALVKEVVRDIQRALIQADVNVRLVLKLTKEIQRRALEEKPPAGISKKEHIIKIVYEELTKFLGTEAKPIEIKEKPTILLMVGVQGSGKTTTVAKLARHFQKRGYKVGVVCSDTWRPGAYHQLKQLLDPYHIEVFGDPNEKDAIKLAKEGVEHFKAKGVDLIIVDTAGRHKEEKDLIEEMRMISNEIKPHEVILVIDGTIGQQAYNQALAFKEATPIGSIIVTKLDSSAKGGGALSAVAATGAPIKFIGTGEKIDDLEPFDPARFVSRLLGLGDIQGLLEKFKELEKEVEFTEEDLERFLKGKFTLKDMYAQLEAMRKMGPLKQILRMIPGLGYSLPDEVISVGEERLRKFKVIMDSMTEEELMNPDIINYSRIKRIARGSGTSVKDVKELLNQYNQMKKFFKSMNKRQLLRLARRFGM.

Residues glycine 107–threonine 114, aspartate 189–arginine 193, and threonine 247–aspartate 250 contribute to the GTP site.

The protein belongs to the GTP-binding SRP family. SRP54 subfamily. In terms of assembly, part of the signal recognition particle protein translocation system, which is composed of SRP and FtsY. Archaeal SRP consists of a 7S RNA molecule of 300 nucleotides and two protein subunits: SRP54 and SRP19.

Its subcellular location is the cytoplasm. It catalyses the reaction GTP + H2O = GDP + phosphate + H(+). Its function is as follows. Involved in targeting and insertion of nascent membrane proteins into the cytoplasmic membrane. Binds to the hydrophobic signal sequence of the ribosome-nascent chain (RNC) as it emerges from the ribosomes. The SRP-RNC complex is then targeted to the cytoplasmic membrane where it interacts with the SRP receptor FtsY. This Pyrococcus abyssi (strain GE5 / Orsay) protein is Signal recognition particle 54 kDa protein.